The sequence spans 636 residues: Leucine-rich repeat and fibronectin type-III domain-containing protein 4 (636 aa).

An N-terminal signal peptide occupies residues 1–16; sequence MAPPLLLLLLASGAAA. In terms of domain architecture, LRRNT spans 17–48; sequence CPLPCVCQNLSESLSTLCAHRGLLFVPPNVDR. The Extracellular portion of the chain corresponds to 17 to 518; the sequence is CPLPCVCQNL…LQAHVLGGTL (502 aa). N-linked (GlcNAc...) asparagine glycosylation is found at asparagine 25 and asparagine 70. LRR repeat units lie at residues 49-70, 73-94, 97-118, 121-142, 146-169, 170-191, and 194-215; these read RTVE…DFRN, GLVD…SFGD, SLRS…SLRG, NLQH…AFDD, SLED…GSMP, ALHT…VFAQ, and QLSR…PLFS. Residues 234 to 280 enclose the LRRCT domain; sequence NPLHCNCELLWLRRLARPDDLETCASPPTLAGRYFWAVPEGEFSCEP. The 87-residue stretch at 281–367 folds into the Ig-like domain; it reads PLIARHTQRL…GEATARVELR (87 aa). Cysteine 302 and cysteine 351 are joined by a disulfide. 4 N-linked (GlcNAc...) asparagine glycosylation sites follow: asparagine 324, asparagine 333, asparagine 376, and asparagine 440. A Fibronectin type-III domain is found at 405-502; that stretch reads SEPAVQVTEV…GCAHFSTLPA (98 aa). The chain crosses the membrane as a helical span at residues 519-539; that stretch reads TVAVGGVLVAALLVFTVALLV. Over 540–636 the chain is Cytoplasmic; the sequence is RGRGAGNGRL…SAERLEESVV (97 aa). Positions 556-585 are disordered; the sequence is VQSQTNGGTSPMPKSHPPRSPPPRPQRSCS. A compositionally biased stretch (pro residues) spans 569–580; sequence KSHPPRSPPPRP. 2 positions are modified to phosphoserine: serine 585 and serine 627. The short motif at 633-636 is the PDZ-binding element; the sequence is ESVV.

This sequence belongs to the LRFN family. As to quaternary structure, can form heteromeric complexes with LRFN1, LRFN2, LRFN3 and LRFN5. Unable to form homophilic interactions across cell junctions. Interacts with DLG1, DLG2 and DLG3. Also interacts with DLG4. Post-translationally, glycosylated. As to expression, expressed in brain and testis. In the brain, weak, but broad expression in the cerebral cortex and diencephalic nuclei. Also detected in other parts of the central nervous system, including the olfactory bulb, pons, cerebellum, and medulla oblongata, as well as in the peripheral nervous system, such as the ganglia of cranial nerves and the dorsal root ganglion during gestation.

The protein resides in the membrane. Its function is as follows. Promotes neurite outgrowth in hippocampal neurons. May play a role in redistributing DLG4 to the cell periphery. In Mus musculus (Mouse), this protein is Leucine-rich repeat and fibronectin type-III domain-containing protein 4 (Lrfn4).